The sequence spans 420 residues: Ribulose bisphosphate carboxylase (420 aa).

Lys155 functions as the Proton acceptor in the catalytic mechanism. A substrate-binding site is contributed by Lys157. Residues Lys181, Asp183, and Glu184 each contribute to the Mg(2+) site. Lys181 carries the N6-carboxylysine modification. Catalysis depends on His273, which acts as the Proton acceptor. Substrate is bound by residues Arg274, His306, 343–345 (SGG), and 365–368 (QAGG).

This sequence belongs to the RuBisCO large chain family. Type III subfamily. Homodimer or homodecamer. In contrast to form I RuBisCO, the form III RuBisCO is composed solely of large subunits. Mg(2+) serves as cofactor.

It carries out the reaction 2 (2R)-3-phosphoglycerate + 2 H(+) = D-ribulose 1,5-bisphosphate + CO2 + H2O. The catalysed reaction is D-ribulose 1,5-bisphosphate + O2 = 2-phosphoglycolate + (2R)-3-phosphoglycerate + 2 H(+). In terms of biological role, catalyzes the addition of molecular CO(2) and H(2)O to ribulose 1,5-bisphosphate (RuBP), generating two molecules of 3-phosphoglycerate (3-PGA). Functions in an archaeal AMP degradation pathway, together with AMP phosphorylase and R15P isomerase. In Pyrococcus furiosus (strain ATCC 43587 / DSM 3638 / JCM 8422 / Vc1), this protein is Ribulose bisphosphate carboxylase.